Here is a 119-residue protein sequence, read N- to C-terminus: Protein TusC (119 aa).

The protein belongs to the DsrF/TusC family. In terms of assembly, heterohexamer, formed by a dimer of trimers. The hexameric TusBCD complex contains 2 copies each of TusB, TusC and TusD. The TusBCD complex interacts with TusE.

The protein resides in the cytoplasm. Its function is as follows. Part of a sulfur-relay system required for 2-thiolation of 5-methylaminomethyl-2-thiouridine (mnm(5)s(2)U) at tRNA wobble positions. This is Protein TusC from Escherichia coli O8 (strain IAI1).